Here is a 216-residue protein sequence, read N- to C-terminus: Serine acetyltransferase (216 aa).

It belongs to the transferase hexapeptide repeat family.

It is found in the cytoplasm. It carries out the reaction L-serine + acetyl-CoA = O-acetyl-L-serine + CoA. It functions in the pathway amino-acid biosynthesis; L-cysteine biosynthesis; L-cysteine from L-serine: step 1/2. This is Serine acetyltransferase (cysE) from Staphylococcus xylosus.